Reading from the N-terminus, the 337-residue chain is Methionyl-tRNA formyltransferase (337 aa).

Residue 110–113 (SLLP) coordinates (6S)-5,6,7,8-tetrahydrofolate.

This sequence belongs to the Fmt family.

It carries out the reaction L-methionyl-tRNA(fMet) + (6R)-10-formyltetrahydrofolate = N-formyl-L-methionyl-tRNA(fMet) + (6S)-5,6,7,8-tetrahydrofolate + H(+). In terms of biological role, attaches a formyl group to the free amino group of methionyl-tRNA(fMet). The formyl group appears to play a dual role in the initiator identity of N-formylmethionyl-tRNA by promoting its recognition by IF2 and preventing the misappropriation of this tRNA by the elongation apparatus. This Frankia casuarinae (strain DSM 45818 / CECT 9043 / HFP020203 / CcI3) protein is Methionyl-tRNA formyltransferase.